We begin with the raw amino-acid sequence, 372 residues long: Peptide chain release factor 2 (372 aa).

At glutamine 253 the chain carries N5-methylglutamine.

Belongs to the prokaryotic/mitochondrial release factor family. In terms of processing, methylated by PrmC. Methylation increases the termination efficiency of RF2.

Its subcellular location is the cytoplasm. Its function is as follows. Peptide chain release factor 2 directs the termination of translation in response to the peptide chain termination codons UGA and UAA. In Mycolicibacterium gilvum (strain PYR-GCK) (Mycobacterium gilvum (strain PYR-GCK)), this protein is Peptide chain release factor 2.